Reading from the N-terminus, the 431-residue chain is 5-methylthioadenosine/S-adenosylhomocysteine deaminase (431 aa).

Zn(2+)-binding residues include histidine 63 and histidine 65. Substrate-binding residues include glutamate 92, arginine 144, and histidine 184. Position 211 (histidine 211) interacts with Zn(2+). Residues glutamate 214 and aspartate 299 each contribute to the substrate site. Aspartate 299 serves as a coordination point for Zn(2+).

This sequence belongs to the metallo-dependent hydrolases superfamily. MTA/SAH deaminase family. It depends on Zn(2+) as a cofactor.

The catalysed reaction is S-adenosyl-L-homocysteine + H2O + H(+) = S-inosyl-L-homocysteine + NH4(+). It catalyses the reaction S-methyl-5'-thioadenosine + H2O + H(+) = S-methyl-5'-thioinosine + NH4(+). Functionally, catalyzes the deamination of 5-methylthioadenosine and S-adenosyl-L-homocysteine into 5-methylthioinosine and S-inosyl-L-homocysteine, respectively. Is also able to deaminate adenosine. The chain is 5-methylthioadenosine/S-adenosylhomocysteine deaminase from Thermoanaerobacter pseudethanolicus (strain ATCC 33223 / 39E) (Clostridium thermohydrosulfuricum).